A 113-amino-acid polypeptide reads, in one-letter code: Death-associated protein-like 1.S (113 aa).

The segment at 1–53 (MTKELKVQSSPQALKAGHLPAVKAGGMRVSKKQGNDENSAPEKNAKKTLQEKP) is disordered.

The protein belongs to the DAP-DAPL1 family. Associates with ribosomes; preventing translation. Interacts with eiF5a (eif5a and eif5a2); preventing translation.

In terms of biological role, ribosome-binding protein that promotes ribosome hibernation, a process during which ribosomes are stabilized in an inactive state and preserved from proteasomal degradation. Acts via its association with eiF5a (eif5a and eif5a2) at the polypeptide exit tunnel of the ribosome, preventing mRNA translation. Plays a key role in ribosome hibernation in the mature egg by preventing mRNA translation, leading to ribosome inactivation. Ribosomes, which are produced in large quantities during oogenesis, are stored and translationally repressed in the egg and early embryo. In Xenopus laevis (African clawed frog), this protein is Death-associated protein-like 1.S (dapl1.S).